A 300-amino-acid polypeptide reads, in one-letter code: Geranylgeranyl pyrophosphate synthase (300 aa).

An N-acetylmethionine modification is found at methionine 1. Lysine 25, arginine 28, and histidine 57 together coordinate isopentenyl diphosphate. Residues aspartate 64 and aspartate 68 each coordinate Mg(2+). Arginine 73 is a dimethylallyl diphosphate binding site. Arginine 74 is a binding site for isopentenyl diphosphate. The dimethylallyl diphosphate site is built by lysine 151, threonine 152, glutamine 185, lysine 202, and lysine 212.

The protein belongs to the FPP/GGPP synthase family. Homohexamer; trimer of homodimers. The cofactor is Mg(2+). In terms of tissue distribution, abundantly expressed in testis. Found in other tissues to a lower extent. Expressed in dermal fibroblast and skeletal muscle.

The protein localises to the cytoplasm. The protein resides in the perinuclear region. It localises to the myofibril. Its subcellular location is the sarcomere. It is found in the z line. It carries out the reaction isopentenyl diphosphate + dimethylallyl diphosphate = (2E)-geranyl diphosphate + diphosphate. The enzyme catalyses isopentenyl diphosphate + (2E)-geranyl diphosphate = (2E,6E)-farnesyl diphosphate + diphosphate. It catalyses the reaction isopentenyl diphosphate + (2E,6E)-farnesyl diphosphate = (2E,6E,10E)-geranylgeranyl diphosphate + diphosphate. The protein operates within isoprenoid biosynthesis; farnesyl diphosphate biosynthesis; farnesyl diphosphate from geranyl diphosphate and isopentenyl diphosphate: step 1/1. It functions in the pathway isoprenoid biosynthesis; geranyl diphosphate biosynthesis; geranyl diphosphate from dimethylallyl diphosphate and isopentenyl diphosphate: step 1/1. Its pathway is isoprenoid biosynthesis; geranylgeranyl diphosphate biosynthesis; geranylgeranyl diphosphate from farnesyl diphosphate and isopentenyl diphosphate: step 1/1. With respect to regulation, subject to product inhibition by geranylgeranyl diphosphate. Catalyzes the trans-addition of the three molecules of IPP onto DMAPP to form geranylgeranyl pyrophosphate, an important precursor of carotenoids and geranylated proteins. The polypeptide is Geranylgeranyl pyrophosphate synthase (GGPS1) (Homo sapiens (Human)).